The chain runs to 367 residues: Undecaprenyl-phosphate alpha-N-acetylglucosaminyl 1-phosphate transferase (367 aa).

Transmembrane regions (helical) follow at residues 3–23, 46–66, 69–89, 132–152, 158–178, 187–207, 213–233, 242–262, 294–314, and 318–338; these read LLTV…FLFF, LIPL…FGIV, YIPH…IGAL, VLGP…INAF, IDGL…MILW, IWCF…LGIL, VFMG…ILLE, ISPV…VAIM, AFVL…LAEY, and VPEW…GYCI.

Belongs to the glycosyltransferase 4 family. WecA subfamily. It depends on Mg(2+) as a cofactor. Mn(2+) serves as cofactor.

It localises to the cell inner membrane. The catalysed reaction is di-trans,octa-cis-undecaprenyl phosphate + UDP-N-acetyl-alpha-D-glucosamine = N-acetyl-alpha-D-glucosaminyl-di-trans,octa-cis-undecaprenyl diphosphate + UMP. Its pathway is bacterial outer membrane biogenesis; LPS O-antigen biosynthesis. The protein operates within bacterial outer membrane biogenesis; enterobacterial common antigen biosynthesis. Functionally, catalyzes the transfer of the GlcNAc-1-phosphate moiety from UDP-GlcNAc onto the carrier lipid undecaprenyl phosphate (C55-P), yielding GlcNAc-pyrophosphoryl-undecaprenyl (GlcNAc-PP-C55). This is Undecaprenyl-phosphate alpha-N-acetylglucosaminyl 1-phosphate transferase from Escherichia coli O6:H1 (strain CFT073 / ATCC 700928 / UPEC).